Here is a 389-residue protein sequence, read N- to C-terminus: Chalcone synthase 1A (389 aa).

The active site involves cysteine 164.

This sequence belongs to the thiolase-like superfamily. Chalcone/stilbene synthases family.

The enzyme catalyses (E)-4-coumaroyl-CoA + 3 malonyl-CoA + 3 H(+) = 2',4,4',6'-tetrahydroxychalcone + 3 CO2 + 4 CoA. It participates in secondary metabolite biosynthesis; flavonoid biosynthesis. Functionally, the primary product of this enzyme is 4,2',4',6'-tetrahydroxychalcone (also termed naringenin-chalcone or chalcone) which can under specific conditions spontaneously isomerize into naringenin. The protein is Chalcone synthase 1A (CHS1A) of Solanum tuberosum (Potato).